We begin with the raw amino-acid sequence, 296 residues long: CRISPR-associated endonuclease Cas1 2 (296 aa).

Mn(2+)-binding residues include Glu-157, His-224, and Asp-237.

Belongs to the CRISPR-associated endonuclease Cas1 family. Homodimer, forms a heterotetramer with a Cas2 homodimer. Requires Mg(2+) as cofactor. Mn(2+) is required as a cofactor.

Functionally, CRISPR (clustered regularly interspaced short palindromic repeat), is an adaptive immune system that provides protection against mobile genetic elements (viruses, transposable elements and conjugative plasmids). CRISPR clusters contain spacers, sequences complementary to antecedent mobile elements, and target invading nucleic acids. CRISPR clusters are transcribed and processed into CRISPR RNA (crRNA). Acts as a dsDNA endonuclease. Involved in the integration of spacer DNA into the CRISPR cassette. In Chlorobaculum tepidum (strain ATCC 49652 / DSM 12025 / NBRC 103806 / TLS) (Chlorobium tepidum), this protein is CRISPR-associated endonuclease Cas1 2.